Here is a 329-residue protein sequence, read N- to C-terminus: 4-hydroxythreonine-4-phosphate dehydrogenase (329 aa).

Positions 136 and 137 each coordinate substrate. The a divalent metal cation site is built by His-166, His-211, and His-266. 3 residues coordinate substrate: Lys-274, Asn-283, and Arg-292.

Belongs to the PdxA family. In terms of assembly, homodimer. It depends on Zn(2+) as a cofactor. Requires Mg(2+) as cofactor. Co(2+) is required as a cofactor.

Its subcellular location is the cytoplasm. The enzyme catalyses 4-(phosphooxy)-L-threonine + NAD(+) = 3-amino-2-oxopropyl phosphate + CO2 + NADH. It functions in the pathway cofactor biosynthesis; pyridoxine 5'-phosphate biosynthesis; pyridoxine 5'-phosphate from D-erythrose 4-phosphate: step 4/5. In terms of biological role, catalyzes the NAD(P)-dependent oxidation of 4-(phosphooxy)-L-threonine (HTP) into 2-amino-3-oxo-4-(phosphooxy)butyric acid which spontaneously decarboxylates to form 3-amino-2-oxopropyl phosphate (AHAP). The polypeptide is 4-hydroxythreonine-4-phosphate dehydrogenase (Salmonella arizonae (strain ATCC BAA-731 / CDC346-86 / RSK2980)).